The chain runs to 75 residues: uncharacterized protein (75 aa).

The signal sequence occupies residues 1–18 (MRKYLSARSMCCSFFSCA).

This is an uncharacterized protein from Treponema pallidum (strain Nichols).